A 373-amino-acid chain; its full sequence is UDP-N-acetylenolpyruvoylglucosamine reductase (373 aa).

Positions 30-203 (LACTANSVVT…SRVGFRLHTD (174 aa)) constitute an FAD-binding PCMH-type domain. Residue Arg-180 is part of the active site. Ser-258 acts as the Proton donor in catalysis. Glu-356 is an active-site residue.

This sequence belongs to the MurB family. The cofactor is FAD.

It localises to the cytoplasm. The enzyme catalyses UDP-N-acetyl-alpha-D-muramate + NADP(+) = UDP-N-acetyl-3-O-(1-carboxyvinyl)-alpha-D-glucosamine + NADPH + H(+). The protein operates within cell wall biogenesis; peptidoglycan biosynthesis. Functionally, cell wall formation. This Psychrobacter arcticus (strain DSM 17307 / VKM B-2377 / 273-4) protein is UDP-N-acetylenolpyruvoylglucosamine reductase.